A 518-amino-acid chain; its full sequence is Integrator complex subunit 14 (518 aa).

The region spanning 2–204 is the VWFA domain; sequence PTVVVMDVSL…KNVQSMFGKL (203 aa). Mg(2+) contacts are provided by S10, S12, and T86. Residue K418 is modified to N6-acetyllysine.

This sequence belongs to the Integrator subunit 14 family. In terms of assembly, component of the Integrator complex, composed of core subunits INTS1, INTS2, INTS3, INTS4, INTS5, INTS6, INTS7, INTS8, INTS9/RC74, INTS10, INTS11/CPSF3L, INTS12, INTS13, INTS14 and INTS15. The core complex associates with protein phosphatase 2A subunits PPP2CA and PPP2R1A, to form the Integrator-PP2A (INTAC) complex. INTS14 is part of the tail subcomplex, composed of INTS10, INTS13, INTS14 and INTS15. Strongly expressed in numerous cancer cells compared with their non-cancerous counterparts (lung, prostate, colon, stomach and skin).

Its subcellular location is the nucleus. Functionally, component of the integrator complex, a multiprotein complex that terminates RNA polymerase II (Pol II) transcription in the promoter-proximal region of genes. The integrator complex provides a quality checkpoint during transcription elongation by driving premature transcription termination of transcripts that are unfavorably configured for transcriptional elongation: the complex terminates transcription by (1) catalyzing dephosphorylation of the C-terminal domain (CTD) of Pol II subunit POLR2A/RPB1 and SUPT5H/SPT5, (2) degrading the exiting nascent RNA transcript via endonuclease activity and (3) promoting the release of Pol II from bound DNA. The integrator complex is also involved in terminating the synthesis of non-coding Pol II transcripts, such as enhancer RNAs (eRNAs), small nuclear RNAs (snRNAs), telomerase RNAs and long non-coding RNAs (lncRNAs). Within the integrator complex, INTS14 is part of the integrator tail module that acts as a platform for the recruitment of transcription factors at promoters. The polypeptide is Integrator complex subunit 14 (Homo sapiens (Human)).